The chain runs to 883 residues: Ankyrin repeat and SAM domain-containing protein 6 (883 aa).

ANK repeat units lie at residues 8–37, 68–97, 101–130, 134–163, 181–210, 215–244, 282–312, 316–345, 350–379, and 383–414; these read PGLQ…DPVA, AGNS…SVNS, YGWS…DVNA, LGAS…IVDH, LGIT…DPNH, VGWS…NPDH, KRRP…HVNL, DGAT…DMDK, HGWT…DVAL, and NGYT…QVNK. Residues 30–50 form a disordered region; it reads EPGADPVAGPEAGAEPAGPEA. Disordered stretches follow at residues 414-439, 490-522, 566-773, and 852-883; these read KDRG…IPVL, MRAP…RREK, SHTC…ITDE, and SFES…SSRR. Positions 566–576 are enriched in basic and acidic residues; it reads SHTCHNGKADP. The segment covering 607–630 has biased composition (low complexity); it reads PSISRSPASPASSGSFNHSPHSSG. Over residues 631-640 the composition is skewed to gly residues; it reads GASGIGGMSR. A Phosphoserine modification is found at Ser-649. Polar residues predominate over residues 649 to 661; that stretch reads SGGSVDSVLSQIA. Low complexity-rich tracts occupy residues 687-711 and 720-737; these read SSSP…PSSS and PPSG…TLTP. Residues Ser-732 and Ser-740 each carry the phosphoserine modification. A compositionally biased stretch (low complexity) spans 748-768; sequence SSVSSSSSHRQSKSSGGSSSG. The 64-residue stretch at 771–834 folds into the SAM domain; that stretch reads TDEDELTGIL…LAAISELNAG (64 aa). Polar residues predominate over residues 852–862; that stretch reads SFESSASNTRA. Basic and acidic residues predominate over residues 874–883; the sequence is RPEETVSSRR.

Homooligomer. Interacts with NEK8. Central component of a complex containing at least ANKS6, INVS, NEK8 and NPHP3. ANKS6 may organize complex assembly by linking INVS and NPHP3 to NEK8 and INVS may target the complex to the proximal ciliary axoneme. Interacts (via SAM domain) with BICC1 (via KH domains) in an RNA-dependent manner. Interacts (via SAM domain) with ANKS3 (via SAM domain). In terms of processing, hydroxylated at Asn-129, most probably by HIF1AN. This hydroxylation results in decreased NEK8-binding. In terms of tissue distribution, expressed in kidney (at protein level).

The protein localises to the cell projection. Its subcellular location is the cilium. It is found in the cytoplasm. Functionally, required for renal function. The chain is Ankyrin repeat and SAM domain-containing protein 6 (Anks6) from Mus musculus (Mouse).